Reading from the N-terminus, the 142-residue chain is uncharacterized protein (142 aa).

Over 1–9 the chain is Cytoplasmic; the sequence is MDMVSPVLN. The helical transmembrane segment at 10 to 30 threads the bilayer; that stretch reads LQSSILGELVGIIGKVFFLLI. Over 31-41 the chain is Extracellular; that stretch reads EEIKYPIITPK. Residues 42 to 62 form a helical membrane-spanning segment; it reads IIVDAQISSWSLFFFASICNL. Over 63–101 the chain is Cytoplasmic; sequence SAKFREPIVTTSSIISLMESEKDLKNVNEYFQIMAKMLF. Residues 102–122 traverse the membrane as a helical segment; it reads ILENKIVVSLFVVFNISVLII. Residues 123-142 are Extracellular-facing; sequence VKSEPYSYGKVLFKPSSSIF.

The protein resides in the membrane. This is an uncharacterized protein from Saccharomyces cerevisiae (strain ATCC 204508 / S288c) (Baker's yeast).